Consider the following 350-residue polypeptide: Protein TRIGALACTOSYLDIACYLGLYCEROL 1, chloroplastic (350 aa).

Residues 67–86 (SMSMLEEETSTENNAPSQEA) form a disordered region. A helical membrane pass occupies residues 98–117 (YIWRGLSVPIIAGQVVLRIL). Residues 118-136 (KGKIHWRNTLQQLERTGPK) are Stromal-facing. The helical transmembrane segment at 137 to 157 (SLGVCLLTSTFVGMAFTIQFV) threads the bilayer. Topologically, residues 158–168 (REFTRLGLNRS) are chloroplast intermembrane. A helical membrane pass occupies residues 169-189 (IGGVLALAFSRELSPVITSIV). Over 190–229 (VAGRMGSAFAAELGTMQVSEQTDTLRVLGADPIDYLITPR) the chain is Stromal. A helical transmembrane segment spans residues 230–250 (VIASCLALPFLTLMCFTVGMA). Residues 251–288 (SSALLSDAVYGISINIIMDSAHRALRPWDIVSAMIKSQ) are Chloroplast intermembrane-facing. Residues 289–309 (VFGAIISVISCSWGVTTTGGA) form a helical membrane-spanning segment. Over 310–318 (KGVGESTTS) the chain is Stromal. Residues 319 to 339 (AVVMSLVGIFIADFVLSSFFF) traverse the membrane as a helical segment. Residues 340–350 (QGAGDSLKNCV) lie on the Chloroplast intermembrane side of the membrane.

It belongs to the MlaE permease family. As to quaternary structure, permease subunit of the TGD complex, a lipid translocator at the inner chloroplast envelope membrane made of TGD1, TGD2 and TGD3. Interacts with TGD2 and TGD3 with an overall subunit stoichiometry of 2 TGD1, 2 TGD3 and 8 to 12 TGD2. Interacts with TGD5. In terms of tissue distribution, high levels in green tissues, but low levels in nongreen tissues such as roots.

The protein resides in the plastid. Its subcellular location is the chloroplast inner membrane. Required during embryogenesis. Permease involved in lipid transfer from the endoplasmic reticulum (ER) to plastids, and necessary for thylakoids formation. In Arabidopsis thaliana (Mouse-ear cress), this protein is Protein TRIGALACTOSYLDIACYLGLYCEROL 1, chloroplastic.